The chain runs to 179 residues: Crossover junction endodeoxyribonuclease RuvC (179 aa).

Residues aspartate 12, glutamate 72, and aspartate 144 contribute to the active site. Residues aspartate 12, glutamate 72, and aspartate 144 each coordinate Mg(2+).

It belongs to the RuvC family. In terms of assembly, homodimer which binds Holliday junction (HJ) DNA. The HJ becomes 2-fold symmetrical on binding to RuvC with unstacked arms; it has a different conformation from HJ DNA in complex with RuvA. In the full resolvosome a probable DNA-RuvA(4)-RuvB(12)-RuvC(2) complex forms which resolves the HJ. Mg(2+) is required as a cofactor.

It is found in the cytoplasm. The catalysed reaction is Endonucleolytic cleavage at a junction such as a reciprocal single-stranded crossover between two homologous DNA duplexes (Holliday junction).. The RuvA-RuvB-RuvC complex processes Holliday junction (HJ) DNA during genetic recombination and DNA repair. Endonuclease that resolves HJ intermediates. Cleaves cruciform DNA by making single-stranded nicks across the HJ at symmetrical positions within the homologous arms, yielding a 5'-phosphate and a 3'-hydroxyl group; requires a central core of homology in the junction. The consensus cleavage sequence is 5'-(A/T)TT(C/G)-3'. Cleavage occurs on the 3'-side of the TT dinucleotide at the point of strand exchange. HJ branch migration catalyzed by RuvA-RuvB allows RuvC to scan DNA until it finds its consensus sequence, where it cleaves and resolves the cruciform DNA. The chain is Crossover junction endodeoxyribonuclease RuvC from Dechloromonas aromatica (strain RCB).